Reading from the N-terminus, the 174-residue chain is MNYFELFKFSPAFDIDTALLAERYRELQRAVHPDKFANDTEQQKLLSVQRTAQVNDGFQTLKDPIRRAEHMLSLRGIELSHETTTVKDTGFLMQQMEWREALEDIRDSADPQASIDALYQSFAEYRAQLTQQLTQLLTSEQAEDALLAADQVRKLKFMAKLHDELTRVEDALLD.

The J domain maps to 2–74; the sequence is NYFELFKFSP…IRRAEHMLSL (73 aa).

It belongs to the HscB family. Interacts with HscA and stimulates its ATPase activity.

Functionally, co-chaperone involved in the maturation of iron-sulfur cluster-containing proteins. Seems to help targeting proteins to be folded toward HscA. The chain is Co-chaperone protein HscB homolog from Shewanella baltica (strain OS155 / ATCC BAA-1091).